The chain runs to 193 residues: Ion-translocating oxidoreductase complex subunit A (193 aa).

Transmembrane regions (helical) follow at residues 4-24 (FLLL…QFLG), 39-59 (IGMS…SYLV), 63-83 (ILLP…VIAV), 102-122 (LLGI…VALL), 134-154 (VIYG…FAAM), and 171-191 (SISM…TGLV).

Belongs to the NqrDE/RnfAE family. As to quaternary structure, the complex is composed of six subunits: RnfA, RnfB, RnfC, RnfD, RnfE and RnfG.

It localises to the cell inner membrane. Part of a membrane-bound complex that couples electron transfer with translocation of ions across the membrane. This is Ion-translocating oxidoreductase complex subunit A from Pseudoalteromonas atlantica (strain T6c / ATCC BAA-1087).